A 20-amino-acid chain; its full sequence is Succinate--CoA ligase [ADP-forming] subunit beta, mitochondrial (20 aa).

In terms of domain architecture, ATP-grasp spans 8–20 (SMELLQEAGVSIP).

It belongs to the succinate/malate CoA ligase beta subunit family. ATP-specific subunit beta subfamily. Heterodimer of an alpha and a beta subunit. The beta subunit determines specificity for ATP. Interacts with ALAS2.

Its subcellular location is the mitochondrion. It catalyses the reaction succinate + ATP + CoA = succinyl-CoA + ADP + phosphate. It participates in carbohydrate metabolism; tricarboxylic acid cycle; succinate from succinyl-CoA (ligase route): step 1/1. In terms of biological role, ATP-specific succinyl-CoA synthetase functions in the citric acid cycle (TCA), coupling the hydrolysis of succinyl-CoA to the synthesis of ATP and thus represents the only step of substrate-level phosphorylation in the TCA. The beta subunit provides nucleotide specificity of the enzyme and binds the substrate succinate, while the binding sites for coenzyme A and phosphate are found in the alpha subunit. The protein is Succinate--CoA ligase [ADP-forming] subunit beta, mitochondrial of Canis lupus familiaris (Dog).